We begin with the raw amino-acid sequence, 84 residues long: Chymotrypsin inhibitor Ani s 6 (84 aa).

An N-terminal signal peptide occupies residues 1–22 (MFQSTFFLVLMVCVATARFANK). 5 disulfide bridges follow: Cys-25-Cys-58, Cys-34-Cys-54, Cys-38-Cys-50, Cys-42-Cys-79, and Cys-60-Cys-73. The TIL domain occupies 25–79 (CPPNEEYNECGNPCQEKCDNGEPVICTYQCEHRCFCKQGYVRLTEDGECVPEEFC).

It belongs to the serine protease inhibitor-like (TIL domain-containing) family.

The protein localises to the secreted. Its function is as follows. Inhibits alpha-chymotrypsin, but not trypsin. The sequence is that of Chymotrypsin inhibitor Ani s 6 from Anisakis simplex (Herring worm).